We begin with the raw amino-acid sequence, 860 residues long: Leucine--tRNA ligase (860 aa).

Residues 42–52 (PYPSGRLHMGH) carry the 'HIGH' region motif. The short motif at 619 to 623 (KMSKS) is the 'KMSKS' region element. Residue Lys-622 participates in ATP binding.

Belongs to the class-I aminoacyl-tRNA synthetase family.

It is found in the cytoplasm. It catalyses the reaction tRNA(Leu) + L-leucine + ATP = L-leucyl-tRNA(Leu) + AMP + diphosphate. This is Leucine--tRNA ligase from Pectobacterium carotovorum subsp. carotovorum (strain PC1).